The chain runs to 227 residues: Probable GTP-binding protein EngB (227 aa).

One can recognise an EngB-type G domain in the interval 30–219 (KKPQIIVVGR…MVKINKNVNE (190 aa)). Residues 38–45 (GRSNVGKS), 63–67 (GVTLK), 80–83 (DLPG), 160–163 (NKMD), and 197–199 (IGI) each bind GTP. Mg(2+) contacts are provided by Ser-45 and Thr-65.

It belongs to the TRAFAC class TrmE-Era-EngA-EngB-Septin-like GTPase superfamily. EngB GTPase family. It depends on Mg(2+) as a cofactor.

Functionally, necessary for normal cell division and for the maintenance of normal septation. In Methanococcus aeolicus (strain ATCC BAA-1280 / DSM 17508 / OCM 812 / Nankai-3), this protein is Probable GTP-binding protein EngB.